The chain runs to 589 residues: NADPH-dependent diflavin oxidoreductase 1 (589 aa).

Residues 5 to 151 (ITILYGSETG…YYIEWEAELI (147 aa)) form the Flavodoxin-like domain. FMN is bound by residues 11–16 (SETGNA), 60–63 (STTG), 98–107 (VGDSSYVKYN), and glutamate 133. The 238-residue stretch at 202–439 (DGLKLGTVLE…SIQRSSFKYK (238 aa)) folds into the FAD-binding FR-type domain. FAD contacts are provided by residues arginine 349, 380-383 (RMFS), and 412-415 (GVCT). Residues threonine 452 and 507-508 (SR) contribute to the NADP(+) site. FAD is bound at residue tryptophan 589.

Belongs to the NADPH-dependent diflavin oxidoreductase NDOR1 family. It in the N-terminal section; belongs to the flavodoxin family. This sequence in the C-terminal section; belongs to the flavoprotein pyridine nucleotide cytochrome reductase family. In terms of assembly, interacts with DRE2; as part of the cytosolic iron-sulfur (Fe-S) protein assembly (CIA) machinery. It depends on FAD as a cofactor. The cofactor is FMN.

It is found in the cytoplasm. It localises to the mitochondrion. It carries out the reaction 2 oxidized [2Fe-2S]-[protein] + NADPH = 2 reduced [2Fe-2S]-[protein] + NADP(+) + H(+). NADPH-dependent reductase which is a central component of the cytosolic iron-sulfur (Fe-S) protein assembly (CIA) machinery. Transfers electrons from NADPH via its FAD and FMN prosthetic groups to the [2Fe-2S] cluster of DRE2, another key component of the CIA machinery. In turn, this reduced cluster provides electrons for assembly of cytosolic iron-sulfur cluster proteins. Positively controls H(2)O(2)-induced cell death. The sequence is that of NADPH-dependent diflavin oxidoreductase 1 from Candida albicans (strain SC5314 / ATCC MYA-2876) (Yeast).